The primary structure comprises 187 residues: MRLRLLVSAGMLLVALSSCLPCRALLSRGSVPRAPRAPQPLNFLQPEQPQQPQPVLIRMGEEYFLRLGNLNRSPAARLSPNSTPLTAGRGSRPSHDQAAANFFRVLLQQLQMPQRSLDSRAEPAERGAEDALGGHQGALERERRSEEPPISLDLTFHLLREVLEMARAEQLAQQAHSNRKLMEIIGK.

Positions 1–19 (MRLRLLVSAGMLLVALSSC) are cleaved as a signal peptide. Positions 20-144 (LPCRALLSRG…HQGALERERR (125 aa)) are excised as a propeptide. Disordered regions lie at residues 75–94 (AARLSPNSTPLTAGRGSRPS) and 114–146 (QRSLDSRAEPAERGAEDALGGHQGALERERRSE). Positions 117-129 (LDSRAEPAERGAE) are enriched in basic and acidic residues. Residue Ile185 is modified to Isoleucine amide.

This sequence belongs to the sauvagine/corticotropin-releasing factor/urotensin I family. As to quaternary structure, interacts (via C-terminus) with CRFR1 (via N-terminal extracellular domain). In terms of tissue distribution, expressed in parvocellular paraventricular nucleus of the hypothalamus and in medial accessory olivary nucleus.

The protein resides in the secreted. Functionally, hormone regulating the release of corticotropin from pituitary gland. Induces NLRP6 in intestinal epithelial cells, hence may influence gut microbiota profile. This Mus musculus (Mouse) protein is Corticoliberin (Crh).